We begin with the raw amino-acid sequence, 163 residues long: Putative pre-16S rRNA nuclease (163 aa).

It belongs to the YqgF nuclease family.

The protein localises to the cytoplasm. Could be a nuclease involved in processing of the 5'-end of pre-16S rRNA. This Zymomonas mobilis subsp. mobilis (strain ATCC 31821 / ZM4 / CP4) protein is Putative pre-16S rRNA nuclease.